Reading from the N-terminus, the 316-residue chain is Methionyl-tRNA formyltransferase (316 aa).

Position 110 to 113 (110 to 113 (SLLP)) interacts with (6S)-5,6,7,8-tetrahydrofolate.

It belongs to the Fmt family.

It carries out the reaction L-methionyl-tRNA(fMet) + (6R)-10-formyltetrahydrofolate = N-formyl-L-methionyl-tRNA(fMet) + (6S)-5,6,7,8-tetrahydrofolate + H(+). Attaches a formyl group to the free amino group of methionyl-tRNA(fMet). The formyl group appears to play a dual role in the initiator identity of N-formylmethionyl-tRNA by promoting its recognition by IF2 and preventing the misappropriation of this tRNA by the elongation apparatus. The polypeptide is Methionyl-tRNA formyltransferase (Bacillus licheniformis (strain ATCC 14580 / DSM 13 / JCM 2505 / CCUG 7422 / NBRC 12200 / NCIMB 9375 / NCTC 10341 / NRRL NRS-1264 / Gibson 46)).